We begin with the raw amino-acid sequence, 491 residues long: UDP-N-acetylmuramate--L-alanine ligase (491 aa).

126 to 132 is a binding site for ATP; that stretch reads GTHGKTT.

Belongs to the MurCDEF family.

The protein resides in the cytoplasm. The catalysed reaction is UDP-N-acetyl-alpha-D-muramate + L-alanine + ATP = UDP-N-acetyl-alpha-D-muramoyl-L-alanine + ADP + phosphate + H(+). It participates in cell wall biogenesis; peptidoglycan biosynthesis. Its function is as follows. Cell wall formation. This chain is UDP-N-acetylmuramate--L-alanine ligase, found in Photorhabdus laumondii subsp. laumondii (strain DSM 15139 / CIP 105565 / TT01) (Photorhabdus luminescens subsp. laumondii).